A 480-amino-acid chain; its full sequence is Proline--tRNA ligase (480 aa).

This sequence belongs to the class-II aminoacyl-tRNA synthetase family. ProS type 3 subfamily. In terms of assembly, homodimer.

Its subcellular location is the cytoplasm. It carries out the reaction tRNA(Pro) + L-proline + ATP = L-prolyl-tRNA(Pro) + AMP + diphosphate. Catalyzes the attachment of proline to tRNA(Pro) in a two-step reaction: proline is first activated by ATP to form Pro-AMP and then transferred to the acceptor end of tRNA(Pro). The sequence is that of Proline--tRNA ligase from Mycobacterium leprae (strain Br4923).